We begin with the raw amino-acid sequence, 84 residues long: Cytochrome b559 subunit alpha (84 aa).

Residues 22–36 (IIHSITIPSLFVAGF) form a helical membrane-spanning segment. A heme-binding site is contributed by His24.

The protein belongs to the PsbE/PsbF family. As to quaternary structure, heterodimer of an alpha subunit and a beta subunit. PSII is composed of 1 copy each of membrane proteins PsbA, PsbB, PsbC, PsbD, PsbE, PsbF, PsbH, PsbI, PsbJ, PsbK, PsbL, PsbM, PsbT, PsbX, PsbY, PsbZ, Psb30/Ycf12, at least 3 peripheral proteins of the oxygen-evolving complex and a large number of cofactors. It forms dimeric complexes. Heme b serves as cofactor.

The protein resides in the plastid. It is found in the chloroplast thylakoid membrane. This b-type cytochrome is tightly associated with the reaction center of photosystem II (PSII). PSII is a light-driven water:plastoquinone oxidoreductase that uses light energy to abstract electrons from H(2)O, generating O(2) and a proton gradient subsequently used for ATP formation. It consists of a core antenna complex that captures photons, and an electron transfer chain that converts photonic excitation into a charge separation. This Emiliania huxleyi (Coccolithophore) protein is Cytochrome b559 subunit alpha.